A 608-amino-acid polypeptide reads, in one-letter code: Sensor protein kinase WalK (608 aa).

2 helical membrane-spanning segments follow: residues 14 to 34 and 183 to 203; these read LVIV…LYFT and IFIV…FFIA. Residues 204–256 form the HAMP domain; it reads RTITKPITDMRNQTVEMSRGNYTQRVKIYGNDEIGELALAFNNLSKRVQEAQA. The PAS domain maps to 261–331; sequence EKRRLDSVIT…EIQENNDSFL (71 aa). Zn(2+) contacts are provided by His271, Asp274, His364, and Glu368. The PAC domain occupies 314-378; it reads LEDEFKLEEI…QQQVERERRE (65 aa). The region spanning 382-600 is the Histidine kinase domain; it reads NVSHELRTPL…SIFITLPCEV (219 aa). A Phosphohistidine; by autocatalysis modification is found at His385.

As to quaternary structure, forms homodimers. Forms homooligomers. Autophosphorylated.

Its subcellular location is the cell membrane. It carries out the reaction ATP + protein L-histidine = ADP + protein N-phospho-L-histidine.. Its activity is regulated as follows. By zinc. Zinc-binding negatively regulates WalK kinase activity and thus autophosphorylation. Functionally, member of the two-component regulatory system WalK/WalR that regulates genes involved in cell wall metabolism, virulence regulation, biofilm production, oxidative stress resistance and antibiotic resistance via direct or indirect regulation of autolysins. Functions as a sensor protein kinase which is autophosphorylated at a histidine residue in the dimerization domain and transfers its phosphate group to the conserved aspartic acid residue in the regulatory domain of WalR. In turn, WalR binds to the upstream promoter regions of the target genes to positively and negatively regulate their expression. This is Sensor protein kinase WalK (walK) from Staphylococcus aureus (strain Newman).